We begin with the raw amino-acid sequence, 373 residues long: Cobalt-precorrin-5B C(1)-methyltransferase (373 aa).

Belongs to the CbiD family.

It catalyses the reaction Co-precorrin-5B + S-adenosyl-L-methionine = Co-precorrin-6A + S-adenosyl-L-homocysteine. The protein operates within cofactor biosynthesis; adenosylcobalamin biosynthesis; cob(II)yrinate a,c-diamide from sirohydrochlorin (anaerobic route): step 6/10. Its function is as follows. Catalyzes the methylation of C-1 in cobalt-precorrin-5B to form cobalt-precorrin-6A. This is Cobalt-precorrin-5B C(1)-methyltransferase from Halorhodospira halophila (strain DSM 244 / SL1) (Ectothiorhodospira halophila (strain DSM 244 / SL1)).